The following is a 75-amino-acid chain: MIYKVLYQKDQIVNPRRETTKTLFLEADNVVAARTMVEDNTPYNIELIQELTGNSLAYEKQSPDFKLTTFDSKDN.

This sequence belongs to the RNA polymerase subunit epsilon family. RNAP is composed of a core of 2 alpha, a beta and a beta' subunit. The core is associated with a delta subunit, and at least one of epsilon or omega. When a sigma factor is associated with the core the holoenzyme is formed, which can initiate transcription.

The enzyme catalyses RNA(n) + a ribonucleoside 5'-triphosphate = RNA(n+1) + diphosphate. Its function is as follows. A non-essential component of RNA polymerase (RNAP). This Lactobacillus johnsonii (strain CNCM I-12250 / La1 / NCC 533) protein is DNA-directed RNA polymerase subunit epsilon.